A 222-amino-acid polypeptide reads, in one-letter code: Endonuclease V (222 aa).

Asp43 and Asp109 together coordinate Mg(2+).

It belongs to the endonuclease V family. Mg(2+) serves as cofactor.

The protein localises to the cytoplasm. The enzyme catalyses Endonucleolytic cleavage at apurinic or apyrimidinic sites to products with a 5'-phosphate.. Its function is as follows. DNA repair enzyme involved in the repair of deaminated bases. Selectively cleaves double-stranded DNA at the second phosphodiester bond 3' to a deoxyinosine leaving behind the intact lesion on the nicked DNA. The chain is Endonuclease V from Roseiflexus castenholzii (strain DSM 13941 / HLO8).